A 519-amino-acid chain; its full sequence is Sorting nexin-2 (519 aa).

Disordered regions lie at residues 1–20 (MAAEREPPPLGDGKPTDFEE) and 30–103 (STVS…VTPV). Low complexity-rich tracts occupy residues 30–44 (STVSTLESSPSSPDP) and 93–103 (SSETSPAVTPV). Phosphoserine is present on Ser-97. Phosphothreonine occurs at positions 101 and 104. Ser-117 and Ser-119 each carry phosphoserine. One can recognise a PX domain in the interval 140 to 269 (FDIEIGVSDP…QFLESSELPR (130 aa)). A 1,2-diacyl-sn-glycero-3-phospho-(1D-myo-inositol-3-phosphate) contacts are provided by Arg-183, Ser-185, Lys-211, and Arg-235. Position 185 is a phosphoserine (Ser-185). Positions 260–519 (QFLESSELPR…AFLPEAKAIA (260 aa)) are interaction with RhoG. A Phosphoserine modification is found at Ser-277. Residues 278-295 (GAGILRMVNKAADAVNKM) are membrane-binding amphipathic helix. The region spanning 299-519 (MNESDAWFEE…AFLPEAKAIA (221 aa)) is the BAR domain. Position 469 is an N6-acetyllysine (Lys-469).

This sequence belongs to the sorting nexin family. In terms of assembly, predominantly forms heterodimers with BAR domain-containing sorting nexins SNX5, SNX6 and SNX32; can self-associate to form homodimers. The heterodimers are proposed to self-assemble into helical arrays on the membrane to stabilize and expand local membrane curvature underlying endosomal tubule formation. Thought to be a component of the originally described retromer complex (also called SNX-BAR retromer) which is a pentamer containing the heterotrimeric retromer cargo-selective complex (CSC), also decribed as vacuolar protein sorting subcomplex (VPS) and a heterodimeric membrane-deforming subcomplex formed between SNX1 or SNX2 and SNX5 or SNX6 (also called SNX-BAR subcomplex); the respective CSC and SNX-BAR subcomplexes associate with low affinity. Interacts with SNX5, SNX6, SNX32, VPS26A, VPS29, VPS35, FNBP1, KALRN, RHOG (GDP-bound form).

It localises to the early endosome membrane. It is found in the cell projection. The protein resides in the lamellipodium. Its function is as follows. Involved in several stages of intracellular trafficking. Interacts with membranes containing phosphatidylinositol 3-phosphate (PtdIns(3P)) or phosphatidylinositol 3,5-bisphosphate (PtdIns(3,5)P2). Acts in part as component of the retromer membrane-deforming SNX-BAR subcomplex. The SNX-BAR retromer mediates retrograde transport of cargo proteins from endosomes to the trans-Golgi network (TGN) and is involved in endosome-to-plasma membrane transport for cargo protein recycling. The SNX-BAR subcomplex functions to deform the donor membrane into a tubular profile called endosome-to-TGN transport carrier (ETC). Can sense membrane curvature and has in vitro vesicle-to-membrane remodeling activity. Required for retrograde endosome-to-TGN transport of TGN38. Promotes KALRN- and RHOG-dependent but retromer-independent membrane remodeling such as lamellipodium formation; the function is dependent on GEF activity of KALRN. The chain is Sorting nexin-2 (SNX2) from Bos taurus (Bovine).